Consider the following 95-residue polypeptide: Exodeoxyribonuclease 7 small subunit (95 aa).

This sequence belongs to the XseB family. Heterooligomer composed of large and small subunits.

The protein resides in the cytoplasm. The catalysed reaction is Exonucleolytic cleavage in either 5'- to 3'- or 3'- to 5'-direction to yield nucleoside 5'-phosphates.. In terms of biological role, bidirectionally degrades single-stranded DNA into large acid-insoluble oligonucleotides, which are then degraded further into small acid-soluble oligonucleotides. The sequence is that of Exodeoxyribonuclease 7 small subunit from Corynebacterium aurimucosum (strain ATCC 700975 / DSM 44827 / CIP 107346 / CN-1) (Corynebacterium nigricans).